Consider the following 284-residue polypeptide: Pantothenate synthetase (284 aa).

Methionine 30–histidine 37 serves as a coordination point for ATP. The active-site Proton donor is histidine 37. Glutamine 61 is a binding site for (R)-pantoate. Residue glutamine 61 coordinates beta-alanine. Position 149–152 (glycine 149–aspartate 152) interacts with ATP. Glutamine 155 lines the (R)-pantoate pocket. ATP-binding positions include isoleucine 178 and leucine 186–arginine 189.

It belongs to the pantothenate synthetase family. In terms of assembly, homodimer.

The protein resides in the cytoplasm. The catalysed reaction is (R)-pantoate + beta-alanine + ATP = (R)-pantothenate + AMP + diphosphate + H(+). It participates in cofactor biosynthesis; (R)-pantothenate biosynthesis; (R)-pantothenate from (R)-pantoate and beta-alanine: step 1/1. Catalyzes the condensation of pantoate with beta-alanine in an ATP-dependent reaction via a pantoyl-adenylate intermediate. In Salmonella newport (strain SL254), this protein is Pantothenate synthetase.